The primary structure comprises 178 residues: ATP-dependent protease subunit HslV (178 aa).

Threonine 5 is an active-site residue. Alanine 160, cysteine 163, and threonine 166 together coordinate Na(+).

The protein belongs to the peptidase T1B family. HslV subfamily. A double ring-shaped homohexamer of HslV is capped on each side by a ring-shaped HslU homohexamer. The assembly of the HslU/HslV complex is dependent on binding of ATP.

The protein resides in the cytoplasm. It carries out the reaction ATP-dependent cleavage of peptide bonds with broad specificity.. With respect to regulation, allosterically activated by HslU binding. Its function is as follows. Protease subunit of a proteasome-like degradation complex believed to be a general protein degrading machinery. The protein is ATP-dependent protease subunit HslV of Magnetococcus marinus (strain ATCC BAA-1437 / JCM 17883 / MC-1).